A 300-amino-acid chain; its full sequence is Protein ARMCX6 (300 aa).

Over 1-6 (MGRARE) the chain is Mitochondrial intermembrane. Mitochondrion outer membrane (MOM)-targeting sequence stretches follow at residues 1–6 (MGRARE) and 26–36 (KLTIGRDDSEK). Residues 7 to 27 (VGWMAAGLMIGAGACYCVYKL) form a helical; Signal-anchor membrane-spanning segment. At 28 to 300 (TIGRDDSEKL…REILLETPAP (273 aa)) the chain is on the cytoplasmic side. Disordered regions lie at residues 35 to 54 (EKLEEEGEEEWDDDQELDEE) and 69 to 99 (WTEDGDWTEPGAPGGTEDRPSGGGKANRAHP).

Belongs to the eutherian X-chromosome-specific Armcx family.

It localises to the mitochondrion. Its subcellular location is the mitochondrion outer membrane. Functionally, may regulate the dynamics and distribution of mitochondria in neural cells. In Homo sapiens (Human), this protein is Protein ARMCX6 (ARMCX6).